A 184-amino-acid chain; its full sequence is Ribosome maturation factor RimM (184 aa).

The region spanning 101–174 is the PRC barrel domain; the sequence is PDEYYDHQLV…RVVIADRPGL (74 aa).

This sequence belongs to the RimM family. In terms of assembly, binds ribosomal protein uS19.

The protein resides in the cytoplasm. Its function is as follows. An accessory protein needed during the final step in the assembly of 30S ribosomal subunit, possibly for assembly of the head region. Essential for efficient processing of 16S rRNA. May be needed both before and after RbfA during the maturation of 16S rRNA. It has affinity for free ribosomal 30S subunits but not for 70S ribosomes. This Nocardioides sp. (strain ATCC BAA-499 / JS614) protein is Ribosome maturation factor RimM.